The primary structure comprises 344 residues: Lipase chaperone (344 aa).

The chain crosses the membrane as a helical span at residues 14–34 (AAIYGGVGLAAVAGVAMWSGA).

This sequence belongs to the lipase chaperone family.

It is found in the cell inner membrane. In terms of biological role, may be involved in the folding of the extracellular lipase during its passage through the periplasm. The sequence is that of Lipase chaperone from Burkholderia cenocepacia (strain ATCC BAA-245 / DSM 16553 / LMG 16656 / NCTC 13227 / J2315 / CF5610) (Burkholderia cepacia (strain J2315)).